We begin with the raw amino-acid sequence, 117 residues long: Large ribosomal subunit protein bL19 (117 aa).

Belongs to the bacterial ribosomal protein bL19 family.

In terms of biological role, this protein is located at the 30S-50S ribosomal subunit interface and may play a role in the structure and function of the aminoacyl-tRNA binding site. This Rhodopirellula baltica (strain DSM 10527 / NCIMB 13988 / SH1) protein is Large ribosomal subunit protein bL19.